Consider the following 344-residue polypeptide: Fructose-1,6-bisphosphatase class 1 (344 aa).

Mg(2+) contacts are provided by Glu-107, Asp-129, Leu-131, and Asp-132. Substrate-binding residues include Asn-224, Tyr-252, and Lys-282. Glu-288 is a Mg(2+) binding site.

Belongs to the FBPase class 1 family. In terms of assembly, homotetramer. Mg(2+) is required as a cofactor.

It is found in the cytoplasm. The enzyme catalyses beta-D-fructose 1,6-bisphosphate + H2O = beta-D-fructose 6-phosphate + phosphate. The protein operates within carbohydrate biosynthesis; Calvin cycle. This is Fructose-1,6-bisphosphatase class 1 from Synechococcus sp. (strain ATCC 27144 / PCC 6301 / SAUG 1402/1) (Anacystis nidulans).